The primary structure comprises 383 residues: Ceramide synthase 3 (383 aa).

The helical transmembrane segment at 32 to 52 threads the bilayer; that stretch reads VFVKASHLYITIPYAFLLMVV. The segment at 66–127 is homeobox-like; it reads NALGIKKTQH…RIRQKQNKPC (62 aa). Positions 130–331 constitute a TLC domain; it reads QKFQESCWRF…ILKMLNRCIF (202 aa). The next 5 membrane-spanning stretches (helical) occupy residues 139 to 159, 174 to 194, 205 to 225, 263 to 283, and 302 to 322; these read FTFY…KPWA, LLPS…SLVF, FLAH…SWCA, LFFI…PFWI, and IFLN…GYFI. Residues 323 to 383 are Cytoplasmic-facing; sequence LKMLNRCIFT…HLIANGQHGR (61 aa). Serine 340 is subject to Phosphoserine. Positions 340-383 are disordered; that stretch reads SDNEEEEEEEEEEEAESTKGKETEYLKNGLGTNRHLIANGQHGR. Positions 342–354 are enriched in acidic residues; the sequence is NEEEEEEEEEEEA. Basic and acidic residues predominate over residues 355–364; sequence ESTKGKETEY.

As to expression, predominantly expressed in testis. In skin, present in the upper stratum spinosum and stratum granulosum (at protein level).

It is found in the endoplasmic reticulum membrane. It carries out the reaction a very long-chain fatty acyl-CoA + a sphingoid base = an N-(very-long-chain fatty acyl)-sphingoid base + CoA + H(+). The enzyme catalyses docosanoyl-CoA + sphinganine = N-docosanoylsphinganine + CoA + H(+). It catalyses the reaction tetracosanoyl-CoA + sphinganine = N-tetracosanoylsphinganine + CoA + H(+). The catalysed reaction is hexacosanoyl-CoA + sphinganine = N-hexacosanoylsphinganine + CoA + H(+). It carries out the reaction 2-hydroxydocosanoyl-CoA + sphinganine = N-(2-hydroxydocosanoyl)-sphinganine + CoA + H(+). The enzyme catalyses 2-hydroxytetracosanoyl-CoA + sphinganine = N-(2-hydroxytetracosanoyl)-sphinganine + CoA + H(+). It catalyses the reaction an ultra-long-chain fatty acyl-CoA + a sphingoid base = an N-(ultra-long-chain-acyl)-sphingoid base + CoA + H(+). The catalysed reaction is octacosanoyl-CoA + sphinganine = N-(octacosanoyl)-sphinganine + CoA + H(+). It carries out the reaction a fatty acyl-CoA + sphing-4-enine = an N-acylsphing-4-enine + CoA + H(+). The enzyme catalyses sphinganine + octadecanoyl-CoA = N-(octadecanoyl)-sphinganine + CoA + H(+). It catalyses the reaction 2-hydroxyoctadecanoyl-CoA + sphinganine = N-(2-hydroxyoctadecanoyl)-sphinganine + CoA + H(+). The protein operates within lipid metabolism; sphingolipid metabolism. In terms of biological role, ceramide synthase that catalyzes the transfer of the acyl chain from acyl-CoA to a sphingoid base, with high selectivity toward very- and ultra-long-chain fatty acyl-CoA (chain length greater than C22). N-acylates sphinganine and sphingosine bases to form dihydroceramides and ceramides in de novo synthesis and salvage pathways, respectively. It is crucial for the synthesis of ultra-long-chain ceramides in the epidermis, to maintain epidermal lipid homeostasis and terminal differentiation. The chain is Ceramide synthase 3 from Mus musculus (Mouse).